The chain runs to 386 residues: Pepsin A (386 aa).

An N-terminal signal peptide occupies residues 1–15 (MKWLLLISLVALSEC). A propeptide spans 16 to 60 (AIVKVPLVRKKSLRQNLIEHGLLNDFLKNQSPNPASKYFPQEPTV) (activation peptide). Residues 74-383 (YFGTIGIGTP…DRANNQVGLA (310 aa)) enclose the Peptidase A1 domain. The active site involves D92. Cystine bridges form between C105-C110 and C266-C270. The active site involves D275. C309 and C342 are disulfide-bonded.

Belongs to the peptidase A1 family.

The protein resides in the secreted. It carries out the reaction Preferential cleavage: hydrophobic, preferably aromatic, residues in P1 and P1' positions. Cleaves 1-Phe-|-Val-2, 4-Gln-|-His-5, 13-Glu-|-Ala-14, 14-Ala-|-Leu-15, 15-Leu-|-Tyr-16, 16-Tyr-|-Leu-17, 23-Gly-|-Phe-24, 24-Phe-|-Phe-25 and 25-Phe-|-Tyr-26 bonds in the B chain of insulin.. In terms of biological role, shows particularly broad specificity; although bonds involving phenylalanine and leucine are preferred, many others are also cleaved to some extent. The sequence is that of Pepsin A (PGA) from Canis lupus familiaris (Dog).